The primary structure comprises 430 residues: Adenylosuccinate synthetase (430 aa).

GTP-binding positions include Gly-12–Lys-18 and Gly-40–Thr-42. Asp-13 acts as the Proton acceptor in catalysis. Positions 13 and 40 each coordinate Mg(2+). Residues Asp-13 to Lys-16, Asn-38 to His-41, Thr-128, Arg-142, Gln-223, Thr-238, and Arg-302 each bind IMP. His-41 functions as the Proton donor in the catalytic mechanism. A substrate-binding site is contributed by Thr-298–Arg-304. GTP-binding positions include Arg-304, Leu-330 to Asp-332, and Ser-412 to Gly-414.

Belongs to the adenylosuccinate synthetase family. Homodimer. Mg(2+) is required as a cofactor.

It is found in the cytoplasm. It carries out the reaction IMP + L-aspartate + GTP = N(6)-(1,2-dicarboxyethyl)-AMP + GDP + phosphate + 2 H(+). The protein operates within purine metabolism; AMP biosynthesis via de novo pathway; AMP from IMP: step 1/2. In terms of biological role, plays an important role in the de novo pathway of purine nucleotide biosynthesis. Catalyzes the first committed step in the biosynthesis of AMP from IMP. This is Adenylosuccinate synthetase from Listeria innocua serovar 6a (strain ATCC BAA-680 / CLIP 11262).